The primary structure comprises 712 residues: Phosphomethylpyrimidine synthase (712 aa).

The interval 14–49 is disordered; the sequence is AIDITAPESTIPNKSKVPNKSAESSQSTVPKAPSRR. The segment covering 20-42 has biased composition (polar residues); sequence PESTIPNKSKVPNKSAESSQSTV. Residues asparagine 283, methionine 312, tyrosine 341, histidine 377, 397-399, 438-441, and glutamate 477 contribute to the substrate site; these read SRG and DGMR. Histidine 481 serves as a coordination point for Zn(2+). Tyrosine 504 is a substrate binding site. Zn(2+) is bound at residue histidine 545. [4Fe-4S] cluster is bound by residues cysteine 625, cysteine 628, and cysteine 633.

It belongs to the ThiC family. Homodimer. It depends on [4Fe-4S] cluster as a cofactor.

It carries out the reaction 5-amino-1-(5-phospho-beta-D-ribosyl)imidazole + S-adenosyl-L-methionine = 4-amino-2-methyl-5-(phosphooxymethyl)pyrimidine + CO + 5'-deoxyadenosine + formate + L-methionine + 3 H(+). The protein operates within cofactor biosynthesis; thiamine diphosphate biosynthesis. In terms of biological role, catalyzes the synthesis of the hydroxymethylpyrimidine phosphate (HMP-P) moiety of thiamine from aminoimidazole ribotide (AIR) in a radical S-adenosyl-L-methionine (SAM)-dependent reaction. The protein is Phosphomethylpyrimidine synthase of Shewanella putrefaciens (strain CN-32 / ATCC BAA-453).